We begin with the raw amino-acid sequence, 157 residues long: 6,7-dimethyl-8-ribityllumazine synthase (157 aa).

5-amino-6-(D-ribitylamino)uracil is bound by residues Phe-22, 57-59, and 81-83; these read AYE and TVI. 86–87 provides a ligand contact to (2S)-2-hydroxy-3-oxobutyl phosphate; that stretch reads GT. Catalysis depends on His-89, which acts as the Proton donor. Phe-114 is a binding site for 5-amino-6-(D-ribitylamino)uracil. Arg-128 provides a ligand contact to (2S)-2-hydroxy-3-oxobutyl phosphate.

It belongs to the DMRL synthase family. As to quaternary structure, forms an icosahedral capsid composed of 60 subunits, arranged as a dodecamer of pentamers.

The enzyme catalyses (2S)-2-hydroxy-3-oxobutyl phosphate + 5-amino-6-(D-ribitylamino)uracil = 6,7-dimethyl-8-(1-D-ribityl)lumazine + phosphate + 2 H2O + H(+). It participates in cofactor biosynthesis; riboflavin biosynthesis; riboflavin from 2-hydroxy-3-oxobutyl phosphate and 5-amino-6-(D-ribitylamino)uracil: step 1/2. Functionally, catalyzes the formation of 6,7-dimethyl-8-ribityllumazine by condensation of 5-amino-6-(D-ribitylamino)uracil with 3,4-dihydroxy-2-butanone 4-phosphate. This is the penultimate step in the biosynthesis of riboflavin. In Pasteurella multocida (strain Pm70), this protein is 6,7-dimethyl-8-ribityllumazine synthase.